A 445-amino-acid polypeptide reads, in one-letter code: Histidinol dehydrogenase (445 aa).

Residues Tyr-130, Gln-192, and Asn-215 each contribute to the NAD(+) site. Substrate is bound by residues Ser-238, Gln-260, and His-263. Zn(2+)-binding residues include Gln-260 and His-263. Catalysis depends on proton acceptor residues Glu-328 and His-329. 4 residues coordinate substrate: His-329, Asp-362, Glu-416, and His-421. Residue Asp-362 participates in Zn(2+) binding. His-421 is a binding site for Zn(2+).

It belongs to the histidinol dehydrogenase family. Zn(2+) serves as cofactor.

It catalyses the reaction L-histidinol + 2 NAD(+) + H2O = L-histidine + 2 NADH + 3 H(+). The protein operates within amino-acid biosynthesis; L-histidine biosynthesis; L-histidine from 5-phospho-alpha-D-ribose 1-diphosphate: step 9/9. Catalyzes the sequential NAD-dependent oxidations of L-histidinol to L-histidinaldehyde and then to L-histidine. The sequence is that of Histidinol dehydrogenase from Gloeobacter violaceus (strain ATCC 29082 / PCC 7421).